The chain runs to 50 residues: ALEASGCLNCHGTDLTGXPAXPATMPPGMFKGSNQQLKALSEFIHGLSAK.

Residues cysteine 7, cysteine 10, histidine 11, and methionine 25 each coordinate heme.

Post-translationally, binds 1 heme group per subunit.

It is found in the cell membrane. The sequence is that of Cytochrome c-555 from Schinkia azotoformans (Bacillus azotoformans).